The following is a 400-amino-acid chain: Na(+)/H(+) antiporter NhaA 1 (400 aa).

The next 11 helical transmembrane spans lie at 25 to 45 (IVLMFCAIIAIIIANSNFSSM), 67 to 87 (ILHWINDGLMAIFFLVVGMEI), 103 to 123 (ILPVSAAIGGMVVPAIIYALF), 130 to 150 (IIGWGIPMATDIAFALGILSL), 159 to 179 (IIIFLTALAIVDDLGAIIVIA), 184 to 204 (SEISWIALILGLIIFLAIILA), 213 to 233 (WLYIIFGIALWICFLKSGVHE), 264 to 284 (VLTPLSSFIIMPIFALANSGI), 303 to 323 (IIFGLFIGKQIGIFGASYILV), 339 to 359 (LYGASVLGGIGFTMSLFVSSL), and 372 to 392 (ISIIIASILSAAFGAAIFKII).

Belongs to the NhaA Na(+)/H(+) (TC 2.A.33) antiporter family.

It is found in the cell membrane. The catalysed reaction is Na(+)(in) + 2 H(+)(out) = Na(+)(out) + 2 H(+)(in). Functionally, na(+)/H(+) antiporter that extrudes sodium in exchange for external protons. The chain is Na(+)/H(+) antiporter NhaA 1 from Clostridium beijerinckii (strain ATCC 51743 / NCIMB 8052) (Clostridium acetobutylicum).